The primary structure comprises 290 residues: Endo-1,4-beta-xylanase B (290 aa).

The signal sequence occupies residues 1 to 19 (MVSFNSLLVAVSAATCALA). Asn26 is a glycosylation site (N-linked (GlcNAc...) asparagine). The region spanning 34-222 (QSTPAGTGTN…SSGSSTVTVN (189 aa)) is the GH11 domain. Glu118 functions as the Nucleophile in the catalytic mechanism. Glu209 serves as the catalytic Proton donor. The segment at 223–248 (PAGGVTSPIAPTGPSSVSTTPSGPSS) is disordered. Over residues 234–248 (TGPSSVSTTPSGPSS) the composition is skewed to low complexity. One can recognise a CBM1 domain in the interval 255–290 (TCSALYGQCGGQGWTGPTCCSSGTCKFSNNWYSQCL).

This sequence belongs to the glycosyl hydrolase 11 (cellulase G) family.

It is found in the secreted. The enzyme catalyses Endohydrolysis of (1-&gt;4)-beta-D-xylosidic linkages in xylans.. It participates in glycan degradation; xylan degradation. Functionally, endo-1,4-beta-xylanase involved in the hydrolysis of xylan, a major structural heterogeneous polysaccharide found in plant biomass representing the second most abundant polysaccharide in the biosphere, after cellulose. The polypeptide is Endo-1,4-beta-xylanase B (xynB) (Phanerodontia chrysosporium (White-rot fungus)).